We begin with the raw amino-acid sequence, 408 residues long: Type II methyltransferase M.VspI (408 aa).

The protein belongs to the N(4)/N(6)-methyltransferase family.

It carries out the reaction a 2'-deoxyadenosine in DNA + S-adenosyl-L-methionine = an N(6)-methyl-2'-deoxyadenosine in DNA + S-adenosyl-L-homocysteine + H(+). Its function is as follows. A gamma subtype methylase, recognizes the double-stranded sequence 5'-ATTAAT-3', methylates A-5 on both strands, and protects the DNA from cleavage by the VspI endonuclease. This is Type II methyltransferase M.VspI from Vibrio sp. (strain 343).